Consider the following 769-residue polypeptide: Glutathione biosynthesis bifunctional protein GshAB (769 aa).

Positions 1–347 (MLDSFKEDPN…QLADENENNI (347 aa)) are glutamate--cysteine ligase. The ATP-grasp domain occupies 514-768 (KLVLAEHDIR…IGDKILDFLF (255 aa)). 541–599 (SLFEDKQIVVKPKSTNYGWGISIFKNKFTLEDYQEALNIAFSYDSSVIIEEFIPGDEFR) contributes to the ATP binding site. Mg(2+) is bound by residues Asp-721, Glu-738, and Asn-740. Mn(2+) is bound by residues Asp-721, Glu-738, and Asn-740.

The protein in the N-terminal section; belongs to the glutamate--cysteine ligase type 1 family. Type 2 subfamily. Monomer. The cofactor is Mg(2+). It depends on Mn(2+) as a cofactor.

The enzyme catalyses L-cysteine + L-glutamate + ATP = gamma-L-glutamyl-L-cysteine + ADP + phosphate + H(+). The catalysed reaction is gamma-L-glutamyl-L-cysteine + glycine + ATP = glutathione + ADP + phosphate + H(+). It functions in the pathway sulfur metabolism; glutathione biosynthesis; glutathione from L-cysteine and L-glutamate: step 1/2. The protein operates within sulfur metabolism; glutathione biosynthesis; glutathione from L-cysteine and L-glutamate: step 2/2. In terms of biological role, synthesizes glutathione from L-glutamate and L-cysteine via gamma-L-glutamyl-L-cysteine. In Listeria monocytogenes serovar 1/2a (strain ATCC BAA-679 / EGD-e), this protein is Glutathione biosynthesis bifunctional protein GshAB.